A 92-amino-acid chain; its full sequence is Protein 10 (92 aa).

Positions 18–29 constitute an EF-hand domain; that stretch reads FMQKYDKNSDQH.

It belongs to the calbindin family. In terms of tissue distribution, brain.

The polypeptide is Protein 10 (Cavia porcellus (Guinea pig)).